A 2530-amino-acid chain; its full sequence is Agglutinin-like protein 2 (2530 aa).

The N-terminal stretch at 1–17 (MLLQFLLLSLCVSVATA) is a signal peptide. Intrachain disulfides connect cysteine 73–cysteine 150, cysteine 96–cysteine 112, cysteine 205–cysteine 297, and cysteine 227–cysteine 256. N-linked (GlcNAc...) asparagine glycans are attached at residues asparagine 253 and asparagine 315. ALS repeat units follow at residues 364–395 (TTIT…VDVP), 400–431 (TTVT…VQVP), 437–468 (VTTT…IREP), 473–504 (VTTT…IREP), 509–540 (VTTT…IREP), and 545–576 (VTTT…IREP). Asparagine 578 carries N-linked (GlcNAc...) asparagine glycosylation. One copy of the ALS 7 repeat lies at 581-612 (VTTTEYWSQSYVTTSTITAPPGGTDTVIIREP). A glycan (N-linked (GlcNAc...) asparagine) is linked at asparagine 614. 7 ALS repeats span residues 617-648 (VTTT…IREP), 653-684 (VTTT…IREP), 689-720 (VTTT…IREP), 725-756 (VTTT…IREP), 761-792 (VTTT…IREP), 797-828 (VTTT…IREP), and 833-864 (VTTT…IREP). A glycan (N-linked (GlcNAc...) asparagine) is linked at asparagine 866. 4 ALS repeats span residues 869 to 900 (VTTT…IREP), 905 to 936 (VTTT…IREP), 941 to 972 (VTTT…IREP), and 977 to 1008 (VTTT…IREP). Positions 954-967 (TTTVTGPPGGTDTV) are enriched in low complexity. The interval 954–975 (TTTVTGPPGGTDTVIIREPPNP) is disordered. N-linked (GlcNAc...) asparagine glycosylation occurs at asparagine 1010. ALS repeat units lie at residues 1013–1044 (VTTT…IREP), 1049–1077 (VTTT…TVII), 1085–1116 (VTTT…IREP), and 1121–1152 (VTTT…IREP). Asparagine 1154 carries an N-linked (GlcNAc...) asparagine glycan. ALS repeat units follow at residues 1157 to 1188 (VTTT…IREP), 1193 to 1224 (VTTT…IREP), 1229 to 1260 (VTTT…IREP), 1265 to 1296 (VTTT…IREP), 1301 to 1332 (VTTT…IREP), and 1337 to 1368 (VTTT…IREP). Asparagine 1370 carries N-linked (GlcNAc...) asparagine glycosylation. An ALS 29 repeat occupies 1373-1404 (VTTTEYWSQSYATTTTVTAPPGGTATVIIREP). N-linked (GlcNAc...) asparagine glycosylation is present at asparagine 1406. Residues 1409-1440 (VTTTEYWSQSYATTTTITAPPGDTDTVIIREP) form an ALS 30 repeat. N-linked (GlcNAc...) asparagine glycosylation is present at asparagine 1442. ALS repeat units follow at residues 1445–1476 (VTTT…IREP) and 1481–1512 (VTTT…IREP). Asparagine 1514 is a glycosylation site (N-linked (GlcNAc...) asparagine). The ALS 33 repeat unit spans residues 1517-1548 (VTTTEYWSQSYATTTTVTAPPGGTATVIIREP). Asparagine 1550 carries an N-linked (GlcNAc...) asparagine glycan. An ALS 34 repeat occupies 1553-1584 (VTTTEYWSQSYATTTTITAPPGDTDTVIIREP). Asparagine 1586 is a glycosylation site (N-linked (GlcNAc...) asparagine). One copy of the ALS 35 repeat lies at 1589-1620 (VTTTEYWSQSYATTTTVTAPPGGTDTVIIREP). Residue asparagine 1622 is glycosylated (N-linked (GlcNAc...) asparagine). Residues 1625–1656 (VTTTEYWSQSYATTTTVTAPPGGTATVIIREP) form an ALS 36 repeat. A glycan (N-linked (GlcNAc...) asparagine) is linked at asparagine 1658. 2 ALS repeats span residues 1661–1692 (VTTT…IREP) and 1697–1728 (VTTT…IREP). Asparagine 1730 is a glycosylation site (N-linked (GlcNAc...) asparagine). The stretch at 1733–1764 (VTTTEYWSQSYATTTTVTAPPGGTDTVIIREP) is one ALS 39 repeat. The N-linked (GlcNAc...) asparagine glycan is linked to asparagine 1766. 2 ALS repeats span residues 1769–1800 (VTTT…IREP) and 1805–1836 (VTTT…IREP). Asparagine 1838 carries an N-linked (GlcNAc...) asparagine glycan. ALS repeat units lie at residues 1841 to 1872 (VTTT…IREP) and 1877 to 1907 (VTTT…RIRE). N-linked (GlcNAc...) asparagine glycosylation is present at asparagine 1910. ALS repeat units lie at residues 1913-1944 (VTTT…IREP) and 1949-1980 (VTTT…IREP). The N-linked (GlcNAc...) asparagine glycan is linked to asparagine 1982. 3 ALS repeats span residues 1985–2016 (VTTT…IREP), 2021–2052 (VTTT…IREP), and 2057–2088 (VTTT…IREP). Asparagine 2090 carries N-linked (GlcNAc...) asparagine glycosylation. ALS repeat units follow at residues 2093 to 2124 (VTTT…IREP) and 2129 to 2157 (VTTT…SVII). Asparagine 2197 carries N-linked (GlcNAc...) asparagine glycosylation. Disordered regions lie at residues 2200 to 2235 (VTHL…GSEN) and 2274 to 2494 (TTII…QQTT). Low complexity predominate over residues 2204–2233 (PSSSSKPVDIPSSDVVTSTNDNSLTSLTGS). N-linked (GlcNAc...) asparagine glycosylation is present at asparagine 2281. The segment covering 2282-2296 (GSGKSKSGELSSTGS) has biased composition (low complexity). 2 stretches are compositionally biased toward polar residues: residues 2329–2420 (STET…SATA) and 2429–2452 (NGAT…TTNI). N-linked (GlcNAc...) asparagine glycans are attached at residues asparagine 2444 and asparagine 2466. Low complexity-rich tracts occupy residues 2453–2471 (QGGN…TGEP) and 2482–2494 (SISQ…QQTT). Aspartate 2507 carries GPI-anchor amidated aspartate lipidation. Residues 2508–2530 (GSGSIVQHSGWLYVLLTAISIFF) constitute a propeptide, removed in mature form.

It belongs to the ALS family. In terms of processing, N-glycosylated and O-glycosylated. Post-translationally, the GPI-anchor is attached to the protein in the endoplasmic reticulum and serves to target the protein to the cell surface. There, the glucosamine-inositol phospholipid moiety is cleaved off and the GPI-modified mannoprotein is covalently attached via its lipidless GPI glycan remnant to the 1,6-beta-glucan of the outer cell wall layer.

The protein localises to the cell membrane. Its subcellular location is the secreted. It localises to the cell wall. Its function is as follows. Cell surface adhesion protein which mediates both yeast-to-host tissue adherence and yeast aggregation. Plays an important role in the pathogenesis of C.albicans infections. This chain is Agglutinin-like protein 2 (ALS2), found in Candida albicans (strain SC5314 / ATCC MYA-2876) (Yeast).